The following is a 178-amino-acid chain: Fibroin heavy chain (178 aa).

The signal sequence occupies residues 1–21 (MRVKTFVILCCALQYVAYTNA). The tract at residues 149–178 (AVGAGAGAGAAAGSGAGAGAGYGAASGAGA) is highly repetitive.

As to quaternary structure, silk fibroin elementary unit consists in a disulfide-linked heavy and light chain and a p25 glycoprotein in molar ratios of 6:6:1. This results in a complex of approximately 2.3 MDa. In terms of processing, the interchain disulfide bridge is essential for the intracellular transport and secretion of fibroin. Produced exclusively in the posterior (PSG) section of silk glands, which are essentially modified salivary glands.

In terms of biological role, core component of the silk filament; a strong, insoluble and chemically inert fiber. The polypeptide is Fibroin heavy chain (FIBH) (Bombyx mandarina (Wild silk moth)).